The primary structure comprises 880 residues: Alanine--tRNA ligase (880 aa).

Residues H563, H567, C673, and H677 each contribute to the Zn(2+) site.

The protein belongs to the class-II aminoacyl-tRNA synthetase family. The cofactor is Zn(2+).

Its subcellular location is the cytoplasm. The enzyme catalyses tRNA(Ala) + L-alanine + ATP = L-alanyl-tRNA(Ala) + AMP + diphosphate. In terms of biological role, catalyzes the attachment of alanine to tRNA(Ala) in a two-step reaction: alanine is first activated by ATP to form Ala-AMP and then transferred to the acceptor end of tRNA(Ala). Also edits incorrectly charged Ser-tRNA(Ala) and Gly-tRNA(Ala) via its editing domain. This is Alanine--tRNA ligase from Caulobacter vibrioides (strain ATCC 19089 / CIP 103742 / CB 15) (Caulobacter crescentus).